The chain runs to 297 residues: Ribosomal RNA small subunit methyltransferase A (297 aa).

S-adenosyl-L-methionine contacts are provided by N31, L33, G58, E79, D104, and N129.

It belongs to the class I-like SAM-binding methyltransferase superfamily. rRNA adenine N(6)-methyltransferase family. RsmA subfamily.

The protein localises to the cytoplasm. It carries out the reaction adenosine(1518)/adenosine(1519) in 16S rRNA + 4 S-adenosyl-L-methionine = N(6)-dimethyladenosine(1518)/N(6)-dimethyladenosine(1519) in 16S rRNA + 4 S-adenosyl-L-homocysteine + 4 H(+). In terms of biological role, specifically dimethylates two adjacent adenosines (A1518 and A1519) in the loop of a conserved hairpin near the 3'-end of 16S rRNA in the 30S particle. May play a critical role in biogenesis of 30S subunits. The chain is Ribosomal RNA small subunit methyltransferase A from Staphylococcus aureus (strain bovine RF122 / ET3-1).